The sequence spans 169 residues: U3 small nucleolar ribonucleoprotein protein imp3 (169 aa).

The S4 RNA-binding domain maps to 109–166 (RRLPVVMCRLKMCETVSTSVKYVEHGHVRVGPEVITDPAFFVTRNMEDFVTWVDSSKI).

This sequence belongs to the universal ribosomal protein uS4 family. As to quaternary structure, component of a heterotrimeric complex containing imp3, imp4 and mpp10.

The protein resides in the nucleus. The protein localises to the nucleolus. Functionally, component of the U3 small nucleolar ribonucleoprotein. Required for the early cleavages at sites A0, A1 and A2 during 18S ribosomal pre-RNA processing. This is U3 small nucleolar ribonucleoprotein protein imp3 (RBP) from Pneumocystis carinii.